The primary structure comprises 185 residues: uncharacterized protein (185 aa).

The next 4 helical transmembrane spans lie at 5–25, 63–83, 97–117, and 149–169; these read SFLI…RIWL, LATV…LILI, FLGL…VLLI, and IIPA…GLQF.

Belongs to the YggT family.

The protein resides in the cell membrane. This is an uncharacterized protein from Vibrio alginolyticus.